The sequence spans 321 residues: Probable DNA polymerase III subunit delta (321 aa).

The protein belongs to the DNA polymerase HolA subunit family. In terms of assembly, component of the DNA clamp loading complex consisting of tau(3):delta(1):delta'(1). The DNA polymerase III holoenzyme complex contains at least 10 different subunits organized into 3 functionally essential subassemblies: the Pol III core, the beta sliding clamp processivity factor and the clamp-loading complex. The Pol III core (subunits alpha, epsilon and theta) contains the polymerase and the 3'-5' exonuclease proofreading activities. The polymerase is tethered to the template via the dimeric beta sliding clamp processivity factor. The DNA clamp-loading complex assembles the beta sliding clamp onto the primed template and plays a central role in the organization and communication at the replication fork.

The enzyme catalyses DNA(n) + a 2'-deoxyribonucleoside 5'-triphosphate = DNA(n+1) + diphosphate. Its function is as follows. Part of the beta sliding clamp loading complex, which hydrolyzes ATP to load the beta clamp onto primed DNA to form the DNA replication pre-initiation complex. DNA polymerase III is a complex, multichain enzyme responsible for most of the replicative synthesis in bacteria. This DNA polymerase also exhibits 3'-5' exonuclease activity. The delta subunit is the wrench that will open the beta subunit dimer. The DNA clamp loading complex (tau(3),delta,delta') is thought to load beta dimers onto DNA by binding ATP which alters the complex's conformation so it can bind beta sliding clamp dimers and open them at one interface. Primed DNA is recognized, ATP is hydrolyzed releasing the clamp loading complex and closing the beta sliding clamp ring around the primed DNA. The chain is Probable DNA polymerase III subunit delta from Rickettsia prowazekii (strain Madrid E).